Consider the following 471-residue polypeptide: Cytochrome b-c1 complex subunit 1, mitochondrial (471 aa).

The protein belongs to the peptidase M16 family.

The protein resides in the mitochondrion matrix. This Caenorhabditis elegans protein is Cytochrome b-c1 complex subunit 1, mitochondrial (ucr-1).